Consider the following 917-residue polypeptide: Isoleucine--tRNA ligase (917 aa).

The 'HIGH' region signature appears at 57 to 67; that stretch reads PYANGNLHMGH. Position 554 (glutamate 554) interacts with L-isoleucyl-5'-AMP. The 'KMSKS' region motif lies at 595–599; it reads KMSKS. Lysine 598 contacts ATP. Residues cysteine 886, cysteine 889, cysteine 906, and cysteine 909 each coordinate Zn(2+).

The protein belongs to the class-I aminoacyl-tRNA synthetase family. IleS type 1 subfamily. In terms of assembly, monomer. It depends on Zn(2+) as a cofactor.

It is found in the cytoplasm. It carries out the reaction tRNA(Ile) + L-isoleucine + ATP = L-isoleucyl-tRNA(Ile) + AMP + diphosphate. In terms of biological role, catalyzes the attachment of isoleucine to tRNA(Ile). As IleRS can inadvertently accommodate and process structurally similar amino acids such as valine, to avoid such errors it has two additional distinct tRNA(Ile)-dependent editing activities. One activity is designated as 'pretransfer' editing and involves the hydrolysis of activated Val-AMP. The other activity is designated 'posttransfer' editing and involves deacylation of mischarged Val-tRNA(Ile). This chain is Isoleucine--tRNA ligase (ileS), found in Staphylococcus aureus (strain MSSA476).